Consider the following 94-residue polypeptide: Small ribosomal subunit protein bS20 (94 aa).

The protein belongs to the bacterial ribosomal protein bS20 family.

Binds directly to 16S ribosomal RNA. The polypeptide is Small ribosomal subunit protein bS20 (Aquifex aeolicus (strain VF5)).